We begin with the raw amino-acid sequence, 1169 residues long: Chromosome partition protein Smc (1169 aa).

Residue 32 to 39 (PNGSGKSN) participates in ATP binding. The stretch at 166–507 (DEISGIAEFD…RIKALKEMEE (342 aa)) forms a coiled coil. Residues 523–636 (PGIIDIVGNL…ENIDIAKELA (114 aa)) enclose the SMC hinge domain. A coiled-coil region spans residues 676 to 1030 (SKLNKIADEI…NKKKEVFMEV (355 aa)).

It belongs to the SMC family. In terms of assembly, homodimer.

It localises to the cytoplasm. In terms of biological role, required for chromosome condensation and partitioning. The polypeptide is Chromosome partition protein Smc (Methanocaldococcus jannaschii (strain ATCC 43067 / DSM 2661 / JAL-1 / JCM 10045 / NBRC 100440) (Methanococcus jannaschii)).